Reading from the N-terminus, the 362-residue chain is Carbamoyl phosphate synthase pyrimidine-specific small chain (362 aa).

Residues 1–168 are CPSase; it reads MKRQLILEDG…TRDPYHVPGP (168 aa). 3 residues coordinate L-glutamine: Ser45, Gly219, and Gly221. Positions 171–358 constitute a Glutamine amidotransferase type-1 domain; the sequence is RVVLVDYGMK…IKLMESNKHR (188 aa). Cys246 (nucleophile) is an active-site residue. 5 residues coordinate L-glutamine: Leu247, Gln250, Asn288, Gly290, and Tyr291. Catalysis depends on residues His331 and Glu333.

Belongs to the CarA family. Composed of two chains; the small (or glutamine) chain promotes the hydrolysis of glutamine to ammonia, which is used by the large (or ammonia) chain to synthesize carbamoyl phosphate. Tetramer of heterodimers (alpha,beta)4.

It carries out the reaction hydrogencarbonate + L-glutamine + 2 ATP + H2O = carbamoyl phosphate + L-glutamate + 2 ADP + phosphate + 2 H(+). The enzyme catalyses L-glutamine + H2O = L-glutamate + NH4(+). It participates in pyrimidine metabolism; UMP biosynthesis via de novo pathway; (S)-dihydroorotate from bicarbonate: step 1/3. Small subunit of the glutamine-dependent carbamoyl phosphate synthetase (CPSase). CPSase catalyzes the formation of carbamoyl phosphate from the ammonia moiety of glutamine, carbonate, and phosphate donated by ATP, constituting the first step of the biosynthetic pathway leading to pyrimidine nucleotides. The small subunit (glutamine amidotransferase) binds and cleaves glutamine to supply the large subunit with the substrate ammonia. The chain is Carbamoyl phosphate synthase pyrimidine-specific small chain from Halalkalibacterium halodurans (strain ATCC BAA-125 / DSM 18197 / FERM 7344 / JCM 9153 / C-125) (Bacillus halodurans).